A 235-amino-acid chain; its full sequence is uncharacterized protein (235 aa).

Disordered stretches follow at residues 20–64 (IHPN…LPIK) and 140–164 (SQFF…NFDQ). Low complexity-rich tracts occupy residues 30–60 (NNNN…SNNN) and 140–161 (SQFF…NNKN). The stretch at 174-213 (KYMEFLSDIEQLNSDLKESKDNLESISIEMVLLETRLKGL) forms a coiled coil.

This is an uncharacterized protein from Dictyostelium discoideum (Social amoeba).